A 348-amino-acid polypeptide reads, in one-letter code: Phenylalanine--tRNA ligase alpha subunit (348 aa).

E268 contributes to the Mg(2+) binding site.

The protein belongs to the class-II aminoacyl-tRNA synthetase family. Phe-tRNA synthetase alpha subunit type 1 subfamily. As to quaternary structure, tetramer of two alpha and two beta subunits. Mg(2+) is required as a cofactor.

It localises to the cytoplasm. It carries out the reaction tRNA(Phe) + L-phenylalanine + ATP = L-phenylalanyl-tRNA(Phe) + AMP + diphosphate + H(+). This is Phenylalanine--tRNA ligase alpha subunit from Bordetella bronchiseptica (strain ATCC BAA-588 / NCTC 13252 / RB50) (Alcaligenes bronchisepticus).